Consider the following 429-residue polypeptide: 3-oxo-tetronate kinase (429 aa).

Residues Ser268, 366–369 (GGET), and Gly410 each bind ATP.

Belongs to the four-carbon acid sugar kinase family.

The catalysed reaction is 3-dehydro-L-erythronate + ATP = 3-dehydro-4-O-phospho-L-erythronate + ADP + H(+). The enzyme catalyses 3-dehydro-D-erythronate + ATP = 3-dehydro-4-O-phospho-D-erythronate + ADP + H(+). Its function is as follows. Catalyzes the ATP-dependent phosphorylation of 3-oxo-tetronate to 3-oxo-tetronate 4-phosphate. The sequence is that of 3-oxo-tetronate kinase from Pseudomonas savastanoi pv. phaseolicola (strain 1448A / Race 6) (Pseudomonas syringae pv. phaseolicola (strain 1448A / Race 6)).